The following is a 430-amino-acid chain: tRNA(Ile)-lysidine synthase (430 aa).

21–26 (SGGLDS) contributes to the ATP binding site.

This sequence belongs to the tRNA(Ile)-lysidine synthase family.

The protein localises to the cytoplasm. It carries out the reaction cytidine(34) in tRNA(Ile2) + L-lysine + ATP = lysidine(34) in tRNA(Ile2) + AMP + diphosphate + H(+). In terms of biological role, ligates lysine onto the cytidine present at position 34 of the AUA codon-specific tRNA(Ile) that contains the anticodon CAU, in an ATP-dependent manner. Cytidine is converted to lysidine, thus changing the amino acid specificity of the tRNA from methionine to isoleucine. The polypeptide is tRNA(Ile)-lysidine synthase (Salmonella schwarzengrund (strain CVM19633)).